Reading from the N-terminus, the 97-residue chain is Aspartyl/glutamyl-tRNA(Asn/Gln) amidotransferase subunit C (97 aa).

It belongs to the GatC family. Heterotrimer of A, B and C subunits.

The enzyme catalyses L-glutamyl-tRNA(Gln) + L-glutamine + ATP + H2O = L-glutaminyl-tRNA(Gln) + L-glutamate + ADP + phosphate + H(+). The catalysed reaction is L-aspartyl-tRNA(Asn) + L-glutamine + ATP + H2O = L-asparaginyl-tRNA(Asn) + L-glutamate + ADP + phosphate + 2 H(+). Functionally, allows the formation of correctly charged Asn-tRNA(Asn) or Gln-tRNA(Gln) through the transamidation of misacylated Asp-tRNA(Asn) or Glu-tRNA(Gln) in organisms which lack either or both of asparaginyl-tRNA or glutaminyl-tRNA synthetases. The reaction takes place in the presence of glutamine and ATP through an activated phospho-Asp-tRNA(Asn) or phospho-Glu-tRNA(Gln). The protein is Aspartyl/glutamyl-tRNA(Asn/Gln) amidotransferase subunit C of Synechococcus sp. (strain CC9902).